Here is a 141-residue protein sequence, read N- to C-terminus: Hemoglobin subunit alpha (141 aa).

The Globin domain maps to 1 to 141 (VLSPADKSNV…VSTVLTSKYR (141 aa)). Residue Ser3 is modified to Phosphoserine. N6-succinyllysine occurs at positions 7 and 11. An N6-acetyllysine; alternate modification is found at Lys16. Lys16 carries the post-translational modification N6-succinyllysine; alternate. Tyr24 carries the phosphotyrosine modification. Ser35 carries the phosphoserine modification. Lys40 carries the post-translational modification N6-succinyllysine. The residue at position 49 (Ser49) is a Phosphoserine. His58 lines the O2 pocket. A heme b-binding site is contributed by His87. Ser102 is subject to Phosphoserine. Thr108 is modified (phosphothreonine). Ser124 and Ser131 each carry phosphoserine. Residues Thr134 and Thr137 each carry the phosphothreonine modification. At Ser138 the chain carries Phosphoserine.

This sequence belongs to the globin family. As to quaternary structure, heterotetramer of two alpha chains and two beta chains. As to expression, red blood cells.

In terms of biological role, involved in oxygen transport from the lung to the various peripheral tissues. Its function is as follows. Hemopressin acts as an antagonist peptide of the cannabinoid receptor CNR1. Hemopressin-binding efficiently blocks cannabinoid receptor CNR1 and subsequent signaling. This chain is Hemoglobin subunit alpha (HBA), found in Saguinus mystax (Moustached tamarin).